Here is a 422-residue protein sequence, read N- to C-terminus: MAMDKKGDLEWMPPRPEPVHWRNRQRSLAYSVTLTLVALFFTFALRPEAFPSFLVRKGLHKSPLEQVLTRVPLTDGHNDFAIWTRAFYQNHIYRANFTDHDELYGQVDFPRLRKGRLGAQFWSVYVECARNPNEPGVQYEIVRDTFQQIDLVHRMINHFPDFLVPASSVADVHHNFYHSPGRISSLLGIEGLHQIGGSASVLRMYHELGVRYASLTHTCHNEYADSEAPEEPRHGGLSTAGEAIVAEMNRMGMIVDLSHTSLATQRAVFNVTRAPVMYSHSSAYALCPHSRNVPDDLLQMLKENDGIVMISLYPEYTNCQDADAASLADVADHIQYVGNLIGYRHVGLGSDFDGMSHGPKGLEDVSKYPDLIQELLDRGVSVDDLVGVTGGNVLRVLGDVEHVARSLADTLPLEDDVKPFFE.

A helical membrane pass occupies residues 28–45; the sequence is LAYSVTLTLVALFFTFAL. His77 and Asp79 together coordinate Zn(2+). An N-linked (GlcNAc...) asparagine glycan is attached at Asn96. Cys128 and Cys219 form a disulfide bridge. Glu190 serves as a coordination point for Zn(2+). His217 is a substrate binding site. N-linked (GlcNAc...) asparagine glycosylation occurs at Asn270. Cys287 and Cys319 are joined by a disulfide. Substrate is bound by residues Arg291 and Asp351.

Belongs to the metallo-dependent hydrolases superfamily. Peptidase M19 family. Zn(2+) is required as a cofactor.

It is found in the membrane. It carries out the reaction an L-aminoacyl-L-amino acid + H2O = 2 an L-alpha-amino acid. Its pathway is mycotoxin biosynthesis. Dipeptidase; part of the gene cluster that mediates the biosynthesis of aspirochlorine (or antibiotic A30641), an unusual halogenated spiro compound with distinctive antifungal properties due to selective inhibition of protein biosynthesis, and which is also active against bacteria, viruses, and murine tumor cells. The non-ribosomal peptide synthetase (NRPS) aclP is responsible the formation of the diketopiperazine (DKP) core from the condensation of 2 phenylalanine residues. One Phe residue is tailored into chlorotyrosine by hydroxylation and chlorination, whereas the second Phe undergoes an unprecedented C-C bond cleavage to be converted into glycine. After formation of the DKP, sulfur is incorporated into the DKP by conjugation with glutathione by aclG, followed by its stepwise degradation to the thiol by aclI, aclJ and aclK, and the dithiol oxidation by aclT. In addition, oxygenases (aclB, aclC, aclL and aclO) and O-methyltransferases (aclM and aclU) act as tailoring enzymes to produce the intermediate dechloroaspirochlorine. Ultimately, chlorination of dechloroaspirochlorine by the halogenase aclH is the last step in the aspirochlorine pathway. The polypeptide is Dipeptidase aclJ (Aspergillus oryzae (strain ATCC 42149 / RIB 40) (Yellow koji mold)).